The following is a 523-amino-acid chain: MPGVRSLLLALAGVSLAPAVLAADASTDSSDVHALKTDTFKDFIKEHDLVLAEFYAPWCGHCKALAPEYEKAATELKSKNIQLAKVDCTEEADLCQEYGVEGYPTLKVFRGLDSHKPYNGARKSPAITSYMIKQSLPSVSVVTAENFEEVKSLDKVVVVAFIGEDDKETNKTYTALADSMRDDVLFAGTSSAELAKKEGVSLPAVVLYKEFDDRKDVYDGKFEAEALKAFIKSSSTPLVGEVGPETYSGYMSAGIPLAYIFADTAEEREQYASDFKDLAKKLKGKINFATIDSKAFGAHAANLNLIPEKFPAFAIQDTVSNKKYPFDQEKKLTKQDITKFVEGVIAGDIAPSVKSEAVPETNDGPVTVIVAHTYEEIVMNKDKDVLVEFYAPWCGHCKALAPKYDQLGSLYKDNKDFASKVTIAKVDATANDIPDEIQGFPTIKLFPADDKDKPVEYTGSRTIEDLANFVRDNGKHKVDAYDEKKVEKDGSDVTGKPKDAEAPPKPSDAPESEEKADKEHEEL.

An N-terminal signal peptide occupies residues 1-22 (MPGVRSLLLALAGVSLAPAVLA). The Thioredoxin 1 domain occupies 24 to 137 (DASTDSSDVH…TSYMIKQSLP (114 aa)). Residues Cys-59 and Cys-62 each act as nucleophile in the active site. A disulfide bridge connects residues Cys-59 and Cys-62. An N-linked (GlcNAc...) asparagine glycan is attached at Asn-170. In terms of domain architecture, Thioredoxin 2 spans 344 to 475 (VIAGDIAPSV…LANFVRDNGK (132 aa)). Cys-394 and Cys-397 are oxidised to a cystine. Composition is skewed to basic and acidic residues over residues 478-502 (VDAYDEKKVEKDGSDVTGKPKDAEA) and 512-523 (SEEKADKEHEEL). The segment at 478 to 523 (VDAYDEKKVEKDGSDVTGKPKDAEAPPKPSDAPESEEKADKEHEEL) is disordered. The short motif at 520 to 523 (HEEL) is the Prevents secretion from ER element.

It belongs to the protein disulfide isomerase family.

It is found in the endoplasmic reticulum lumen. It catalyses the reaction Catalyzes the rearrangement of -S-S- bonds in proteins.. Functionally, participates in the folding of proteins containing disulfide bonds, may be involved in glycosylation, prolyl hydroxylation and triglyceride transfer. This is Protein disulfide-isomerase from Arthroderma benhamiae (strain ATCC MYA-4681 / CBS 112371) (Trichophyton mentagrophytes).